The chain runs to 460 residues: MSFTFAIIGRPNVGKSTLFNRLVGQKLALVDDTPGVTRDRREGEGRLGDLEFTIIDTAGLDEGAKGSLTARMQQQTETAIELADALMFVFDARAGLTPNDRAFADFARRANKPVVLVANKSEGKAGEIGAMESYALGLGDPVQISAEHGEGLSELYDALRALMPEPDVELEDDEEIDGLTEEDFSKRPIRVAIVGRPNAGKSTFINRLLGEDRLLTSPEAGTTRDSIAVEVNWKGRDFRIFDTAGLRRRSRIEEKLEKLSVADALRAVRFAEVVVLMMDSQNRFEEQDLRIADLIEREGRALVIAVNKWDLVERQGGQIAQLRTDADHWLPQIKGVPIVATSGMLGEGVDRMMEAIQDAYAVWNTRVPTAALNRWFEQAVAQNPPPAVAGRRLKLNYVTQTKARPPSFVVFCSRADAVPQSYLRYLVNSLRGVFELPGTPVRIMLREKANPFAHKRKRKS.

EngA-type G domains lie at 3 to 167 (FTFA…PEPD) and 189 to 364 (IRVA…AVWN). GTP-binding positions include 9–16 (GRPNVGKS), 56–60 (DTAGL), 119–122 (NKSE), 195–202 (GRPNAGKS), 242–246 (DTAGL), and 307–310 (NKWD). Residues 365–449 (TRVPTAALNR…PVRIMLREKA (85 aa)) form the KH-like domain.

It belongs to the TRAFAC class TrmE-Era-EngA-EngB-Septin-like GTPase superfamily. EngA (Der) GTPase family. In terms of assembly, associates with the 50S ribosomal subunit.

In terms of biological role, GTPase that plays an essential role in the late steps of ribosome biogenesis. This chain is GTPase Der, found in Rhodopseudomonas palustris (strain BisB5).